The chain runs to 349 residues: Autophagy-related protein 3 (349 aa).

The tract at residues Ala95–Asn173 is flexible region. Cys244 functions as the Glycyl thioester intermediate in the catalytic mechanism. Positions Ser248–Gln325 are handle region. The ATG8 interaction motif (AIM) signature appears at Trp306–Val309.

The protein belongs to the ATG3 family. In terms of assembly, monomer. Interacts with ATG8 through an intermediate thioester bond between Cys-244 and the C-terminal Gly of ATG8. Interacts with the C-terminal region of the E1-like ATG7 enzyme. Also interacts with the ATG12-ATG5 conjugate.

It localises to the cytoplasm. Its function is as follows. E2 conjugating enzyme required for the cytoplasm to vacuole transport (Cvt) and autophagy. Required for selective autophagic degradation of the nucleus (nucleophagy) as well as for mitophagy which contributes to regulate mitochondrial quantity and quality by eliminating the mitochondria to a basal level to fulfill cellular energy requirements and preventing excess ROS production. Responsible for the E2-like covalent binding of phosphatidylethanolamine to the C-terminal Gly of ATG8. The ATG12-ATG5 conjugate plays a role of an E3 and promotes the transfer of ATG8 from ATG3 to phosphatidylethanolamine (PE). This step is required for the membrane association of ATG8. The formation of the ATG8-phosphatidylethanolamine conjugate is essential for autophagy and for the cytoplasm to vacuole transport (Cvt). The ATG8-PE conjugate mediates tethering between adjacent membranes and stimulates membrane hemifusion, leading to expansion of the autophagosomal membrane during autophagy. Autophagy is required for proper vegetative growth, asexual/sexual reproduction, and full virulence. Autophagy is particularly involved in the biosynthesis of deoxynivalenol (DON), an important virulence determinant. The sequence is that of Autophagy-related protein 3 from Gibberella zeae (strain ATCC MYA-4620 / CBS 123657 / FGSC 9075 / NRRL 31084 / PH-1) (Wheat head blight fungus).